Consider the following 182-residue polypeptide: Probable tyrosine phosphatase protein H4 (182 aa).

Residues 1–182 (MEINKFICSQ…TVLKIQKSKI (182 aa)) enclose the Tyrosine-protein phosphatase domain. Cys-142 functions as the Phosphocysteine intermediate in the catalytic mechanism.

It belongs to the protein-tyrosine phosphatase family.

The enzyme catalyses O-phospho-L-tyrosyl-[protein] + H2O = L-tyrosyl-[protein] + phosphate. The sequence is that of Probable tyrosine phosphatase protein H4 (H5) from Microplitis demolitor (Parasitoid wasp).